We begin with the raw amino-acid sequence, 392 residues long: MAFLKLTEQNVQGKTVLIRADMNVPFKDGKISDDTRIRASLASIKYCVDNGASVIVMTHLGRPTEGEFHPEDDVAPVAAHLGSLLGKDVKVLNDWRENKPALNAGDVVMLQNVRINKGEKKNDLELGKAYASLCDVFVNDAFGTAHRAQASTEAVAQAAPVACAGVLMAGELDALGKALKQPARPMVAIVAGSKVSTKLTILESLADKVDQLIVGGGIANTFLLAEGKAIGKSLAEHDLVEESKKIMAKMAAKGGSVPLPTDVVVAKAFAADAEAVVKDIADVAEDEMILDIGPKSAAALADLLKAAGTVVWNGPVGVFEFDQFAGGTKALAEAIAQSKAFSIAGGGDTLAAIAKFGVTEQIGYISTGGGAFLEFLEGKELPAVAALEKRGA.

Substrate contacts are provided by residues D21–N23, R36, H59–R62, R114, and R147. Residues K198, E320, and G346–T349 each bind ATP.

Belongs to the phosphoglycerate kinase family. As to quaternary structure, monomer.

The protein localises to the cytoplasm. It catalyses the reaction (2R)-3-phosphoglycerate + ATP = (2R)-3-phospho-glyceroyl phosphate + ADP. It participates in carbohydrate degradation; glycolysis; pyruvate from D-glyceraldehyde 3-phosphate: step 2/5. The chain is Phosphoglycerate kinase (pgk) from Neisseria meningitidis serogroup B (strain ATCC BAA-335 / MC58).